Consider the following 299-residue polypeptide: Leucine zipper transcription factor-like protein 1 (299 aa).

Residues Leu-96–Glu-296 adopt a coiled-coil conformation. The tract at residues Gly-145–Asp-299 is interaction with BSS9.

Belongs to the LZTFL1 family. Self-associates. Interacts with BBS9; the interaction mediates the association of LZTL1 with the BBsome complex and regulates BBSome ciliary trafficking. Expressed in prostate, ovary, stomach, pancreas, esophagus, breast, liver, bladder, kidney, thyroid, colon and lung (at protein level). Down-regulated in multiple primary tumors (at protein level). Detected in testis, heart, skeletal muscle, thymus, spleen, small intestine, and peripheral blood leukocytes.

It localises to the cytoplasm. Regulates ciliary localization of the BBSome complex. Together with the BBSome complex, controls SMO ciliary trafficking and contributes to the sonic hedgehog (SHH) pathway regulation. May play a role in neurite outgrowth. May have tumor suppressor function. The polypeptide is Leucine zipper transcription factor-like protein 1 (LZTFL1) (Homo sapiens (Human)).